Reading from the N-terminus, the 336-residue chain is Glycerol-3-phosphate dehydrogenase [NAD(P)+] (336 aa).

NADPH-binding residues include Ser13, Trp14, Arg34, and Lys108. Positions 108, 138, and 140 each coordinate sn-glycerol 3-phosphate. Position 142 (Ala142) interacts with NADPH. Positions 193, 246, 256, 257, and 258 each coordinate sn-glycerol 3-phosphate. The active-site Proton acceptor is Lys193. Arg257 contacts NADPH. The NADPH site is built by Val281 and Glu283.

Belongs to the NAD-dependent glycerol-3-phosphate dehydrogenase family.

Its subcellular location is the cytoplasm. The catalysed reaction is sn-glycerol 3-phosphate + NAD(+) = dihydroxyacetone phosphate + NADH + H(+). The enzyme catalyses sn-glycerol 3-phosphate + NADP(+) = dihydroxyacetone phosphate + NADPH + H(+). Its pathway is membrane lipid metabolism; glycerophospholipid metabolism. Functionally, catalyzes the reduction of the glycolytic intermediate dihydroxyacetone phosphate (DHAP) to sn-glycerol 3-phosphate (G3P), the key precursor for phospholipid synthesis. The protein is Glycerol-3-phosphate dehydrogenase [NAD(P)+] of Carboxydothermus hydrogenoformans (strain ATCC BAA-161 / DSM 6008 / Z-2901).